The sequence spans 415 residues: Alpha-2Db adrenergic receptor (415 aa).

Residues 1 to 33 (MDLSTITFLLPNSSEDTNGTSAPRLPPHSQCAS) are Extracellular-facing. Residues N12 and N18 are each glycosylated (N-linked (GlcNAc...) asparagine). Residues 34 to 58 (VLIVLVVTVIILVTIVGNVLVVVAV) form a helical membrane-spanning segment. The Cytoplasmic segment spans residues 59–70 (FTSRALRAPQNL). A helical membrane pass occupies residues 71-96 (FLVSLAAADILVATLVIPFSLANEVM). At 97–106 (GYWYLGSTWC) the chain is on the extracellular side. Cysteines 106 and 179 form a disulfide. Residues 107 to 129 (AFYLALDVLFCTSSIVHLCAISL) traverse the membrane as a helical segment. Over 130–150 (DRYWSVTKAVSYNLKRTPRRI) the chain is Cytoplasmic. The chain crosses the membrane as a helical span at residues 151 to 173 (KIMITVVWVISAVISFPPLLMTK). The Extracellular portion of the chain corresponds to 174 to 184 (HDELECLLNNE). An N-linked (GlcNAc...) asparagine glycan is attached at N183. Residues 185–208 (TWYILSSCIVSFFAPGLIMILVYC) traverse the membrane as a helical segment. The Cytoplasmic portion of the chain corresponds to 209-339 (RIYRVAKQRA…QMREKRFTFV (131 aa)). A disordered region spans residues 234–299 (QSETCFVRKG…EGAQSCPKPN (66 aa)). A compositionally biased stretch (basic residues) spans 276-286 (NRHRNSRFAKS). Residues 340–363 (LAVVMGVFVLCWFPFFFTYSLHAI) form a helical membrane-spanning segment. Topologically, residues 364–376 (CRKSCTIPDSLFN) are extracellular. Residues 377–397 (LFFWIGYCNSSVNPIIYTIFN) traverse the membrane as a helical segment. Over 398–415 (RDFRKAFKKIMCRHSTRT) the chain is Cytoplasmic.

This sequence belongs to the G-protein coupled receptor 1 family. Adrenergic receptor subfamily. ADRA2D sub-subfamily.

It localises to the cell membrane. Alpha-2 adrenergic receptors mediate the catecholamine-induced inhibition of adenylate cyclase through the action of G proteins. The order of potency for this receptor is dexmedetomidine &gt; norepinephrine = epinephrine &gt; oxymetazoline. This is Alpha-2Db adrenergic receptor (adra2db) from Danio rerio (Zebrafish).